We begin with the raw amino-acid sequence, 234 residues long: MKGKLIVFEGGEGSGKTTQLQRSRQWLESSGWLARLQQTLPTLAKPLLVTREPGGTALGIKLRQLLLNSDPEDVIQSRTELLLFAADRAQHVATRLQPHLEAGGLILCDRFTDSTVAYQGYGRGLSLALIDQLNQIATDGLTSDLTLWLDLDVEMGLERSRQRLQQSGGGLDRIERGEIAFHQRVQQGFRALSQAAPERIVTIDASQPEAMVADKIQRILEEKLWQWYPQVSML.

Residue 10-17 (GGEGSGKT) participates in ATP binding.

The protein belongs to the thymidylate kinase family.

It catalyses the reaction dTMP + ATP = dTDP + ADP. Its function is as follows. Phosphorylation of dTMP to form dTDP in both de novo and salvage pathways of dTTP synthesis. This chain is Thymidylate kinase, found in Cyanothece sp. (strain PCC 7425 / ATCC 29141).